The following is a 274-amino-acid chain: 2,3,4,5-tetrahydropyridine-2,6-dicarboxylate N-succinyltransferase (274 aa).

Arg106 and Asp143 together coordinate substrate.

It belongs to the transferase hexapeptide repeat family. In terms of assembly, homotrimer.

It localises to the cytoplasm. The catalysed reaction is (S)-2,3,4,5-tetrahydrodipicolinate + succinyl-CoA + H2O = (S)-2-succinylamino-6-oxoheptanedioate + CoA. The protein operates within amino-acid biosynthesis; L-lysine biosynthesis via DAP pathway; LL-2,6-diaminopimelate from (S)-tetrahydrodipicolinate (succinylase route): step 1/3. This is 2,3,4,5-tetrahydropyridine-2,6-dicarboxylate N-succinyltransferase from Paracidovorax citrulli (strain AAC00-1) (Acidovorax citrulli).